The sequence spans 104 residues: L-rhamnose mutarotase (104 aa).

A substrate-binding site is contributed by tyrosine 18. Histidine 22 serves as the catalytic Proton donor. Residues tyrosine 41 and 76-77 each bind substrate; that span reads WW.

This sequence belongs to the rhamnose mutarotase family. As to quaternary structure, homodimer.

It is found in the cytoplasm. It carries out the reaction alpha-L-rhamnose = beta-L-rhamnose. The protein operates within carbohydrate metabolism; L-rhamnose metabolism. In terms of biological role, involved in the anomeric conversion of L-rhamnose. This Escherichia coli O7:K1 (strain IAI39 / ExPEC) protein is L-rhamnose mutarotase.